The chain runs to 127 residues: Small ribosomal subunit protein uS13 (127 aa).

The protein belongs to the universal ribosomal protein uS13 family. Part of the 30S ribosomal subunit. Forms a loose heterodimer with protein S19. Forms two bridges to the 50S subunit in the 70S ribosome.

In terms of biological role, located at the top of the head of the 30S subunit, it contacts several helices of the 16S rRNA. In the 70S ribosome it contacts the 23S rRNA (bridge B1a) and protein L5 of the 50S subunit (bridge B1b), connecting the 2 subunits; these bridges are implicated in subunit movement. Contacts the tRNAs in the A and P-sites. The chain is Small ribosomal subunit protein uS13 from Pelagibacter ubique (strain HTCC1062).